The following is a 1397-amino-acid chain: Probable cyclin-dependent serine/threonine-protein kinase DDB_G0292550 (1397 aa).

The Protein kinase domain occupies 4-287 (FQIIELIGSG…TKEALNHPWF (284 aa)). ATP contacts are provided by residues 10 to 18 (IGSGSYGKV) and Lys-33. The active-site Proton acceptor is the Asp-124. Disordered stretches follow at residues 412-567 (NNNN…NNNN), 671-728 (PLSI…NNGF), 763-831 (NEMG…NGNN), 845-949 (NNNN…YANH), 996-1101 (NGLA…NTHN), 1115-1174 (NNGF…NSPV), 1227-1324 (NSAS…SFGL), and 1340-1397 (KKKK…IVLD). A compositionally biased stretch (low complexity) spans 676–715 (SQHHNTSSSDTHNNNNNNYNNNNNNNNNINNNNINSIHNQ). Low complexity-rich tracts occupy residues 845 to 941 (NNNN…NGNG), 1012 to 1021 (NSNNNNSGNN), 1028 to 1101 (NTFN…NTHN), and 1115 to 1155 (NNGF…TKNN). Residues 1156–1171 (TQFGPNILSSTQTSHN) are compositionally biased toward polar residues. 2 stretches are compositionally biased toward low complexity: residues 1253-1321 (NNNN…NNNS) and 1354-1380 (SSSQ…SQTQ).

This sequence belongs to the protein kinase superfamily. CMGC Ser/Thr protein kinase family. CDC2/CDKX subfamily.

The catalysed reaction is L-seryl-[protein] + ATP = O-phospho-L-seryl-[protein] + ADP + H(+). It catalyses the reaction L-threonyl-[protein] + ATP = O-phospho-L-threonyl-[protein] + ADP + H(+). This Dictyostelium discoideum (Social amoeba) protein is Probable cyclin-dependent serine/threonine-protein kinase DDB_G0292550.